We begin with the raw amino-acid sequence, 481 residues long: Aspartyl/glutamyl-tRNA(Asn/Gln) amidotransferase subunit B (481 aa).

The protein belongs to the GatB/GatE family. GatB subfamily. In terms of assembly, heterotrimer of A, B and C subunits.

It catalyses the reaction L-glutamyl-tRNA(Gln) + L-glutamine + ATP + H2O = L-glutaminyl-tRNA(Gln) + L-glutamate + ADP + phosphate + H(+). The catalysed reaction is L-aspartyl-tRNA(Asn) + L-glutamine + ATP + H2O = L-asparaginyl-tRNA(Asn) + L-glutamate + ADP + phosphate + 2 H(+). Allows the formation of correctly charged Asn-tRNA(Asn) or Gln-tRNA(Gln) through the transamidation of misacylated Asp-tRNA(Asn) or Glu-tRNA(Gln) in organisms which lack either or both of asparaginyl-tRNA or glutaminyl-tRNA synthetases. The reaction takes place in the presence of glutamine and ATP through an activated phospho-Asp-tRNA(Asn) or phospho-Glu-tRNA(Gln). The chain is Aspartyl/glutamyl-tRNA(Asn/Gln) amidotransferase subunit B from Pseudomonas putida (strain W619).